We begin with the raw amino-acid sequence, 56 residues long: Male determiner protein Yob (56 aa).

Male determiner protein (M-factor) that controls male somatic sexual differentiation. Acts as a dominant factor that regulates the mRNA splicing of doublesex (dsx) transcripts and promotes expression of male splice forms of dsx. This chain is Male determiner protein Yob, found in Anopheles gambiae (African malaria mosquito).